Reading from the N-terminus, the 283-residue chain is Acetylglutamate kinase (283 aa).

Residues 64–65 (GG), arginine 86, and asparagine 178 contribute to the substrate site.

The protein belongs to the acetylglutamate kinase family. ArgB subfamily.

Its subcellular location is the cytoplasm. The enzyme catalyses N-acetyl-L-glutamate + ATP = N-acetyl-L-glutamyl 5-phosphate + ADP. It participates in amino-acid biosynthesis; L-arginine biosynthesis; N(2)-acetyl-L-ornithine from L-glutamate: step 2/4. Its function is as follows. Catalyzes the ATP-dependent phosphorylation of N-acetyl-L-glutamate. In Lactococcus lactis subsp. cremoris (strain SK11), this protein is Acetylglutamate kinase.